The chain runs to 689 residues: MFERNQKTIFVLDHTRYFSIASEEYISMDFLKGKPSADGGATGAAGNASGGGGSQFSKSLWTCACESSIEYCRVVWDLFPGKKHVRFIVSDTAAHIVNTWSPSTQNMSHVMNAMVMVGVPSRNVPTSSDYSVIHGLRAAIEALAEPTDEQLAAMADLGTDELPRIPNKGRVICITSARDNTSMKSLEDIFNTVLVQQNALAAPPAKKGLVIDHCHLVILNIVPLGVESLVTNRSLLKISPLLDVEIHTVSAPDISYKLTHLILNHYDLASTTVTNIPMKEEQNANSSANYDVEILHSRRAHSITCGPDFSLPTSIKQGATYETVTLKWCTPRGCGSADLQPCLGQFLVTPVDVTSRPSSCLINFLLNGRSVLLEMPRKTGSKATSHMLSARGGEIFVHSLCITRSCMDEAPSITDGPGGRVSDYRTAELGQLIKMSRMLPLKVKDPSAPPLTRRLPRYFPLTTSSSILFHLQRHISWLPHFLHLLVKEDMDKQDEVRCQQHIHELYKSASRGDVLPFTHTNGARLKLSKAKDQYRLLYRELEQLIQLNATTMHHKNLLESLQSLRAAYGDAPLKSEPGASLLRSYTESPLSPERLEPNSSGSASGSSNSNSLLKASKRRMSSCGQRSLLDIISSAERSQSNKRLDFSGRLCTPLGQVAKLYPDFGNKDKDTVASGASITPNVKEESVRS.

The stretch at 521 to 550 forms a coiled coil; that stretch reads NGARLKLSKAKDQYRLLYRELEQLIQLNAT. Disordered regions lie at residues 578 to 619 and 662 to 689; these read GASL…SKRR and PDFG…SVRS. The span at 599–614 shows a compositional bias: low complexity; the sequence is SSGSASGSSNSNSLLK. The Nuclear localization signal (NLS) motif lies at 613–619; it reads LKASKRR.

Belongs to the Integrator subunit 13 family. As to quaternary structure, belongs to the multiprotein complex Integrator, at least composed of IntS1, IntS2, IntS3, IntS4, omd/IntS5, IntS6, defl/IntS7, IntS8, IntS9, IntS10, IntS11, IntS12, asun/IntS13, IntS14 and IntS15. The core complex associates with protein phosphatase 2A subunits mts/PP2A and Pp2A-29B, to form the Integrator-PP2A (INTAC) complex. In terms of processing, phosphorylated.

Its subcellular location is the nucleus. It is found in the cytoplasm. The protein localises to the perinuclear region. In terms of biological role, component of the integrator complex, a multiprotein complex that terminates RNA polymerase II (Pol II) transcription in the promoter-proximal region of genes. The integrator complex provides a quality checkpoint during transcription elongation by driving premature transcription termination of transcripts that are unfavorably configured for transcriptional elongation: the complex terminates transcription by (1) catalyzing dephosphorylation of the C-terminal domain (CTD) of Pol II subunit Polr2A/Rbp1 and Spt5, and (2) degrading the exiting nascent RNA transcript via endonuclease activity. The integrator complex is also involved in the 3'-end processing of the U7 snRNA, and also the spliceosomal snRNAs U1, U2, U4 and U5. This chain is Protein asunder (asun), found in Drosophila yakuba (Fruit fly).